Reading from the N-terminus, the 155-residue chain is Fibroblast growth factor 2 (155 aa).

Positions 1–9 (MAAGSITTL) are excised as a propeptide. A disordered region spans residues 1–20 (MAAGSITTLPALPEDGGSGA). Asparagine 36 provides a ligand contact to heparin. The Cell attachment site; atypical motif lies at 46-48 (DGR). Phosphotyrosine; by TEC is present on tyrosine 82. Positions 88–90 (DGR) match the Cell attachment site; atypical motif. Lysine 95 is covalently cross-linked (Glycyl lysine isopeptide (Lys-Gly) (interchain with G-Cter in SUMO1)). The segment at 128–144 (KRTGQYKLGPKTGPGQK) is heparin-binding.

It belongs to the heparin-binding growth factors family. In terms of assembly, monomer. Homodimer. Interacts with FGFR1, FGFR2, FGFR3 and FGFR4. Affinity between fibroblast growth factors (FGFs) and their receptors is increased by heparan sulfate glycosaminoglycans that function as coreceptors. Interacts with CSPG4, FGFBP1 and TEC. Found in a complex with FGFBP1, FGF1 and FGF2. Interacts with FGFBP3. Interacts with integrin ITGAV:ITGB3; the interaction is required for FGF2 signaling. Interacts with SNORC (via the extracellular domain). Interacts with glypican GPC3. Post-translationally, phosphorylation at Tyr-82 regulates FGF2 unconventional secretion.

It is found in the secreted. The protein resides in the nucleus. Acts as a ligand for FGFR1, FGFR2, FGFR3 and FGFR4. Also acts as an integrin ligand which is required for FGF2 signaling. Binds to integrin ITGAV:ITGB3. Plays an important role in the regulation of cell survival, cell division, cell differentiation and cell migration. Functions as a potent mitogen in vitro. Can induce angiogenesis. Mediates phosphorylation of ERK1/2 and thereby promotes retinal lens fiber differentiation. The chain is Fibroblast growth factor 2 (FGF2) from Bos taurus (Bovine).